The primary structure comprises 835 residues: Protein translocase subunit SecA (835 aa).

Residues glutamine 85, 103–107, and aspartate 492 each bind ATP; that span reads GEGKT. Residues 788–807 are disordered; it reads VQGEAVHPSSDGEEAKKKPV. 4 residues coordinate Zn(2+): cysteine 819, cysteine 821, cysteine 830, and cysteine 831.

This sequence belongs to the SecA family. Monomer and homodimer. Part of the essential Sec protein translocation apparatus which comprises SecA, SecYEG and auxiliary proteins SecDF. Other proteins may also be involved. Requires Zn(2+) as cofactor.

It localises to the cell membrane. Its subcellular location is the cytoplasm. The catalysed reaction is ATP + H2O + cellular proteinSide 1 = ADP + phosphate + cellular proteinSide 2.. Part of the Sec protein translocase complex. Interacts with the SecYEG preprotein conducting channel. Has a central role in coupling the hydrolysis of ATP to the transfer of proteins into and across the cell membrane, serving as an ATP-driven molecular motor driving the stepwise translocation of polypeptide chains across the membrane. The sequence is that of Protein translocase subunit SecA from Bacillus cereus (strain B4264).